A 229-amino-acid polypeptide reads, in one-letter code: Putative 3-methyladenine DNA glycosylase (229 aa).

It belongs to the DNA glycosylase MPG family.

In Enterococcus faecalis (strain ATCC 700802 / V583), this protein is Putative 3-methyladenine DNA glycosylase.